The chain runs to 576 residues: Deformed epidermal autoregulatory factor 1 (576 aa).

3 disordered regions span residues 52–76 (VTSSSNDNSGSGGASGGTSGAGGGN), 189–215 (AGGASGVGGGGGGTGGGSSGWSENPST), and 309–362 (ESAS…SGSG). Composition is skewed to gly residues over residues 61-76 (GSGGASGGTSGAGGGN) and 191-207 (GASGVGGGGGGTGGGSS). The SAND domain maps to 210–291 (SENPSTQHNE…QSLIDEGTLT (82 aa)). Positions 324–340 (RKRNQTDLDMESGPKRK) match the Nuclear localization signal motif. Residues 345–362 (HSNNNNSNTNNNNTSGSG) are compositionally biased toward low complexity. Residues cysteine 521, cysteine 524, cysteine 532, cysteine 535, cysteine 541, cysteine 545, histidine 553, and cysteine 557 each coordinate Zn(2+). An MYND-type zinc finger spans residues 521–557 (CANCNREALAECSLCRKTPYCSEFCQRKDWNAHQVEC).

It is found in the nucleus. Its function is as follows. Transcription factor that binds the homeotic Deformed (Dfd) response element. High affinity binding sites contain at least 1 TTCG motif surrounded by additional TCG sequences. May be involved in the selective action of Dfd on these sites without binding directly to the Dfd protein. Requirement of DEAF1 activity may be a common feature of enhancers targeted by Dfd. This is Deformed epidermal autoregulatory factor 1 (Deaf1) from Drosophila melanogaster (Fruit fly).